The sequence spans 517 residues: ADP-ribosylation factor GTPase-activating protein 3 (517 aa).

In terms of domain architecture, Arf-GAP spans Leu-10 to Arg-126. The segment at Cys-25–Cys-48 adopts a C4-type zinc-finger fold. Residues Val-139–Asn-200 are disordered. Positions Glu-159–Pro-176 are enriched in polar residues. A Phosphoserine modification is found at Ser-231. Residues Asn-243 to Ser-263 are a coiled coil. Phosphoserine occurs at positions 271 and 275. Basic and acidic residues predominate over residues Glu-291–Arg-305. Disordered stretches follow at residues Glu-291 to Ser-349 and Met-362 to Phe-422. Polar residues predominate over residues Asn-312 to Pro-333. Ser-371 carries the post-translational modification Phosphoserine. A compositionally biased stretch (basic and acidic residues) spans Tyr-379 to Pro-390. Residues Ser-429, Ser-452, Ser-454, Ser-456, Ser-458, and Ser-459 each carry the phosphoserine modification.

It localises to the cytoplasm. It is found in the golgi apparatus membrane. Its activity is regulated as follows. GAP activity stimulated by phosphatidylinositol 4,5-bisphosphate (PIP2). In terms of biological role, GTPase-activating protein (GAP) for ADP ribosylation factor 1 (ARF1). Hydrolysis of ARF1-bound GTP may lead to dissociation of coatomer from Golgi-derived membranes to allow fusion with target membranes. This chain is ADP-ribosylation factor GTPase-activating protein 3, found in Bos taurus (Bovine).